The chain runs to 464 residues: Chromosomal replication initiator protein DnaA (464 aa).

Residues 1 to 82 (MSLSLWQQCL…LLRFEVGSKP (82 aa)) form a domain I, interacts with DnaA modulators region. Positions 82-127 (PITQVISQTVTASVSSAPAAPAARTAAPSRPSWDNAAAQPELSYRS) are domain II. Over residues 98-113 (APAAPAARTAAPSRPS) the composition is skewed to low complexity. The tract at residues 98–117 (APAAPAARTAAPSRPSWDNA) is disordered. Residues 128-344 (NVNPKHTFDN…GALNRVIANA (217 aa)) form a domain III, AAA+ region region. Positions 172, 174, 175, and 176 each coordinate ATP. The segment at 345-464 (NFTGRAITID…FSNLIRTLSS (120 aa)) is domain IV, binds dsDNA.

It belongs to the DnaA family. As to quaternary structure, oligomerizes as a right-handed, spiral filament on DNA at oriC.

Its subcellular location is the cytoplasm. Functionally, plays an important role in the initiation and regulation of chromosomal replication. Binds to the origin of replication; it binds specifically double-stranded DNA at a 9 bp consensus (dnaA box): 5'-TTATC[CA]A[CA]A-3'. DnaA binds to ATP and to acidic phospholipids. DnaA can inhibit its own gene expression as well as that of other genes. Its function is as follows. Plays an essential role in the initiation and regulation of chromosomal replication. ATP-DnaA binds to the origin of replication (oriC) to initiate formation of the DNA replication initiation complex once per cell cycle. Binds the DnaA box (a 9 base pair repeat at the origin) and separates the double-stranded (ds)DNA. Forms a right-handed helical filament on oriC DNA; dsDNA binds to the exterior of the filament while single-stranded (ss)DNA is stabiized in the filament's interior. The ATP-DnaA-oriC complex binds and stabilizes one strand of the AT-rich DNA unwinding element (DUE), permitting loading of DNA polymerase. After initiation quickly degrades to an ADP-DnaA complex that is not apt for DNA replication. Binds acidic phospholipids. The protein is Chromosomal replication initiator protein DnaA of Serratia marcescens.